Here is a 133-residue protein sequence, read N- to C-terminus: Large ribosomal subunit protein bL17 (133 aa).

The protein belongs to the bacterial ribosomal protein bL17 family. In terms of assembly, part of the 50S ribosomal subunit. Contacts protein L32.

The sequence is that of Large ribosomal subunit protein bL17 from Polaromonas naphthalenivorans (strain CJ2).